We begin with the raw amino-acid sequence, 127 residues long: Large ribosomal subunit protein bL12 (127 aa).

This sequence belongs to the bacterial ribosomal protein bL12 family. As to quaternary structure, homodimer. Part of the ribosomal stalk of the 50S ribosomal subunit. Forms a multimeric L10(L12)X complex, where L10 forms an elongated spine to which 2 to 4 L12 dimers bind in a sequential fashion. Binds GTP-bound translation factors.

Its function is as follows. Forms part of the ribosomal stalk which helps the ribosome interact with GTP-bound translation factors. Is thus essential for accurate translation. In Bordetella bronchiseptica (strain ATCC BAA-588 / NCTC 13252 / RB50) (Alcaligenes bronchisepticus), this protein is Large ribosomal subunit protein bL12.